A 529-amino-acid chain; its full sequence is Bifunctional purine biosynthesis protein PurH (529 aa).

The MGS-like domain maps to 1–148; it reads MQQRRPIRRA…KNHKDVAIVV (148 aa).

It belongs to the PurH family.

It catalyses the reaction (6R)-10-formyltetrahydrofolate + 5-amino-1-(5-phospho-beta-D-ribosyl)imidazole-4-carboxamide = 5-formamido-1-(5-phospho-D-ribosyl)imidazole-4-carboxamide + (6S)-5,6,7,8-tetrahydrofolate. The enzyme catalyses IMP + H2O = 5-formamido-1-(5-phospho-D-ribosyl)imidazole-4-carboxamide. It functions in the pathway purine metabolism; IMP biosynthesis via de novo pathway; 5-formamido-1-(5-phospho-D-ribosyl)imidazole-4-carboxamide from 5-amino-1-(5-phospho-D-ribosyl)imidazole-4-carboxamide (10-formyl THF route): step 1/1. Its pathway is purine metabolism; IMP biosynthesis via de novo pathway; IMP from 5-formamido-1-(5-phospho-D-ribosyl)imidazole-4-carboxamide: step 1/1. This chain is Bifunctional purine biosynthesis protein PurH, found in Pectobacterium atrosepticum (strain SCRI 1043 / ATCC BAA-672) (Erwinia carotovora subsp. atroseptica).